Here is a 162-residue protein sequence, read N- to C-terminus: Ribonuclease H (162 aa).

In terms of domain architecture, RNase H type-1 spans 6–154 (DMKRVEIFTD…ADRLANQGVE (149 aa)). Aspartate 15, glutamate 53, aspartate 82, and aspartate 146 together coordinate Mg(2+).

The protein belongs to the RNase H family. In terms of assembly, monomer. The cofactor is Mg(2+).

The protein resides in the cytoplasm. It catalyses the reaction Endonucleolytic cleavage to 5'-phosphomonoester.. Functionally, endonuclease that specifically degrades the RNA of RNA-DNA hybrids. The polypeptide is Ribonuclease H (Nitrosomonas eutropha (strain DSM 101675 / C91 / Nm57)).